A 257-amino-acid polypeptide reads, in one-letter code: Dof zinc finger protein DOF5.3 (257 aa).

The segment at 23–50 (LSYSSNPTPLDNDQKKPSPATAVTRPQP) is disordered. Positions 24-33 (SYSSNPTPLD) are enriched in polar residues. A Dof-type zinc finger spans residues 55-109 (LRCPRCDSTNTKFCYYNNYSLTQPRYFCKSCRRYWTKGGTLRNIPVGGGCRKNKR). The Zn(2+) site is built by Cys57, Cys60, Cys82, and Cys85. Positions 104-127 (CRKNKRSTSSAARSLRTTPEPASH) are disordered. Positions 110 to 121 (STSSAARSLRTT) are enriched in low complexity.

In terms of tissue distribution, the PEAR proteins (e.g. DOF2.4, DOF5.1, DOF3.2, DOF1.1, DOF5.6 and DOF5.3) form a short-range concentration gradient that peaks at protophloem sieve elements (PSE). Accumulates in the stele.

Its subcellular location is the nucleus. In terms of biological role, transcription factor that binds specifically to a 5'-AA[AG]G-3' consensus core sequence. The PEAR proteins (e.g. DOF2.4, DOF5.1, DOF3.2, DOF1.1, DOF5.6 and DOF5.3) activate gene expression that promotes radial growth of protophloem sieve elements. This is Dof zinc finger protein DOF5.3 from Arabidopsis thaliana (Mouse-ear cress).